Here is a 155-residue protein sequence, read N- to C-terminus: Large ribosomal subunit protein uL22 (155 aa).

It belongs to the universal ribosomal protein uL22 family. Part of the 50S ribosomal subunit. Contacts the macrolide antibiotic tylosin in the polypeptide exit tunnel.

In terms of biological role, this protein binds specifically to 23S rRNA. It makes multiple contacts with different domains of the 23S rRNA in the assembled 50S subunit and ribosome. Contacts all 6 domains of the 23S rRNA, helping stabilize their relative orientation. An extended beta-hairpin in the C-terminus forms part of the polypeptide exit tunnel, in which it helps forms a bend with protein L4, while most of the rest of the protein is located at the polypeptide exit tunnel on the outside of the subunit. In Haloarcula marismortui (strain ATCC 43049 / DSM 3752 / JCM 8966 / VKM B-1809) (Halobacterium marismortui), this protein is Large ribosomal subunit protein uL22.